We begin with the raw amino-acid sequence, 529 residues long: Peptide chain release factor 3 (529 aa).

Residues 11-280 (NKRRTFAIIS…GLTEWAPKPQ (270 aa)) form the tr-type G domain. GTP-binding positions include 20–27 (SHPDAGKT), 88–92 (DTPGH), and 142–145 (NKLD).

The protein belongs to the TRAFAC class translation factor GTPase superfamily. Classic translation factor GTPase family. PrfC subfamily.

The protein localises to the cytoplasm. Functionally, increases the formation of ribosomal termination complexes and stimulates activities of RF-1 and RF-2. It binds guanine nucleotides and has strong preference for UGA stop codons. It may interact directly with the ribosome. The stimulation of RF-1 and RF-2 is significantly reduced by GTP and GDP, but not by GMP. The chain is Peptide chain release factor 3 from Mannheimia succiniciproducens (strain KCTC 0769BP / MBEL55E).